The following is a 72-amino-acid chain: Phycobilisome 37.5 kDa linker polypeptide, phycocyanin-associated, rod (72 aa).

Residues M1–F72 form the PBS-linker domain.

This sequence belongs to the phycobilisome linker protein family.

Its subcellular location is the cellular thylakoid membrane. In terms of biological role, rod linker protein, associated with phycocyanin. Linker polypeptides determine the state of aggregation and the location of the disk-shaped phycobiliprotein units within the phycobilisome and modulate their spectroscopic properties in order to mediate a directed and optimal energy transfer. The sequence is that of Phycobilisome 37.5 kDa linker polypeptide, phycocyanin-associated, rod (cpcH2) from Pseudanabaena tenuis (strain PCC 7409).